The chain runs to 482 residues: Probable cytosol aminopeptidase (482 aa).

Residues Lys251 and Asp256 each contribute to the Mn(2+) site. Lys263 is an active-site residue. Residues Asp274, Asp333, and Glu335 each contribute to the Mn(2+) site. Arg337 is an active-site residue.

The protein belongs to the peptidase M17 family. Mn(2+) is required as a cofactor.

It localises to the cytoplasm. It carries out the reaction Release of an N-terminal amino acid, Xaa-|-Yaa-, in which Xaa is preferably Leu, but may be other amino acids including Pro although not Arg or Lys, and Yaa may be Pro. Amino acid amides and methyl esters are also readily hydrolyzed, but rates on arylamides are exceedingly low.. The enzyme catalyses Release of an N-terminal amino acid, preferentially leucine, but not glutamic or aspartic acids.. Functionally, presumably involved in the processing and regular turnover of intracellular proteins. Catalyzes the removal of unsubstituted N-terminal amino acids from various peptides. This chain is Probable cytosol aminopeptidase, found in Acinetobacter baylyi (strain ATCC 33305 / BD413 / ADP1).